Reading from the N-terminus, the 347-residue chain is MAAPRWIGPLLLLLLHFVAAVAGKSYYDVLQVPKGASEDQIKRSYRKLALKYHPDKNPNNEEANKRFAEINNAYEILTDQEKRKIYDRYGEEGLKQFQAQGGRGGGGGMNIQDIFSSFFGGGGGGMEEEEEQIIKGDDVIVELDASLEDLYMGGSLKVWREKNVIKPAPGKRRCNCRNEVYHRQIGPGMYQQMTEQVCDQCANVKYVREGDFLTVDIEKGMQDGQEVSFFEEGEPKIDGEPGDLKFRIRTAPHERFRREGNDLHTTVTISLLQALVGFEKTIKHLDNHMVEIGTKGITKPKEVRKFKGEGMPLYQSNKKGDLYVTFEVLFPKTLTDDQKSKLKSILT.

Residues 1–23 form the signal peptide; it reads MAAPRWIGPLLLLLLHFVAAVAG. Residues 25 to 90 enclose the J domain; it reads SYYDVLQVPK…EKRKIYDRYG (66 aa).

As to quaternary structure, interacts with BIP1.

It localises to the endoplasmic reticulum. Its function is as follows. May play a role in protein folding in the endoplasmic reticulum. This is DnaJ protein ERDJ3B from Oryza sativa subsp. japonica (Rice).